The chain runs to 340 residues: Gallate dioxygenase (340 aa).

His-45 acts as the Proton donor in catalysis. His-113 serves as the catalytic Proton acceptor.

This sequence belongs to the LigB/MhpB extradiol dioxygenase family. Requires Fe(2+) as cofactor.

It catalyses the reaction 3,4,5-trihydroxybenzoate + O2 = (1E)-4-oxobut-1-ene-1,2,4-tricarboxylate + 2 H(+). Functionally, ring-cleavage dioxygenase that acts specifically on gallate to produce the keto-tautomer of 4-oxalomesaconate. Mediates the first step of gallate degradation pathway. In Pseudomonas putida (strain ATCC 47054 / DSM 6125 / CFBP 8728 / NCIMB 11950 / KT2440), this protein is Gallate dioxygenase (galA).